The primary structure comprises 428 residues: Adenylosuccinate synthetase (428 aa).

GTP is bound by residues Gly12 to Lys18 and Gly40 to Ser42. The active-site Proton acceptor is Asp13. 2 residues coordinate Mg(2+): Asp13 and Gly40. Residues Asp13–Lys16, Asn38–His41, Thr128, Arg142, Gln223, Thr238, and Arg302 contribute to the IMP site. His41 (proton donor) is an active-site residue. Position 298 to 304 (Val298 to Arg304) interacts with substrate. Residues Arg304, Lys330–Asp332, and Gly412–Gly414 each bind GTP.

Belongs to the adenylosuccinate synthetase family. In terms of assembly, homodimer. Requires Mg(2+) as cofactor.

Its subcellular location is the cytoplasm. It carries out the reaction IMP + L-aspartate + GTP = N(6)-(1,2-dicarboxyethyl)-AMP + GDP + phosphate + 2 H(+). It functions in the pathway purine metabolism; AMP biosynthesis via de novo pathway; AMP from IMP: step 1/2. In terms of biological role, plays an important role in the de novo pathway of purine nucleotide biosynthesis. Catalyzes the first committed step in the biosynthesis of AMP from IMP. The protein is Adenylosuccinate synthetase of Bifidobacterium longum (strain NCC 2705).